We begin with the raw amino-acid sequence, 456 residues long: Bifunctional protein GlmU (456 aa).

The pyrophosphorylase stretch occupies residues 1 to 229 (MSSHAMSVVI…LSEVEGVNNR (229 aa)). UDP-N-acetyl-alpha-D-glucosamine contacts are provided by residues 11 to 14 (LAAG), Lys-25, Gln-76, 81 to 82 (GT), 103 to 105 (YGD), Gly-140, Glu-154, Asn-169, and Asn-227. Position 105 (Asp-105) interacts with Mg(2+). Position 227 (Asn-227) interacts with Mg(2+). The tract at residues 230–250 (LQLARLEHVYQAEQAEKLLLA) is linker. Residues 251–456 (GVMLRDPARF…QGWRRPVKKK (206 aa)) are N-acetyltransferase. Residues Arg-333 and Lys-351 each contribute to the UDP-N-acetyl-alpha-D-glucosamine site. The active-site Proton acceptor is His-363. Residues Tyr-366 and Asn-377 each coordinate UDP-N-acetyl-alpha-D-glucosamine. Acetyl-CoA is bound by residues Ala-380, 386-387 (NY), Ser-405, Ala-423, and Arg-440.

The protein in the N-terminal section; belongs to the N-acetylglucosamine-1-phosphate uridyltransferase family. This sequence in the C-terminal section; belongs to the transferase hexapeptide repeat family. In terms of assembly, homotrimer. It depends on Mg(2+) as a cofactor.

The protein resides in the cytoplasm. It carries out the reaction alpha-D-glucosamine 1-phosphate + acetyl-CoA = N-acetyl-alpha-D-glucosamine 1-phosphate + CoA + H(+). The enzyme catalyses N-acetyl-alpha-D-glucosamine 1-phosphate + UTP + H(+) = UDP-N-acetyl-alpha-D-glucosamine + diphosphate. It functions in the pathway nucleotide-sugar biosynthesis; UDP-N-acetyl-alpha-D-glucosamine biosynthesis; N-acetyl-alpha-D-glucosamine 1-phosphate from alpha-D-glucosamine 6-phosphate (route II): step 2/2. Its pathway is nucleotide-sugar biosynthesis; UDP-N-acetyl-alpha-D-glucosamine biosynthesis; UDP-N-acetyl-alpha-D-glucosamine from N-acetyl-alpha-D-glucosamine 1-phosphate: step 1/1. It participates in bacterial outer membrane biogenesis; LPS lipid A biosynthesis. Functionally, catalyzes the last two sequential reactions in the de novo biosynthetic pathway for UDP-N-acetylglucosamine (UDP-GlcNAc). The C-terminal domain catalyzes the transfer of acetyl group from acetyl coenzyme A to glucosamine-1-phosphate (GlcN-1-P) to produce N-acetylglucosamine-1-phosphate (GlcNAc-1-P), which is converted into UDP-GlcNAc by the transfer of uridine 5-monophosphate (from uridine 5-triphosphate), a reaction catalyzed by the N-terminal domain. In Cronobacter sakazakii (strain ATCC BAA-894) (Enterobacter sakazakii), this protein is Bifunctional protein GlmU.